A 218-amino-acid chain; its full sequence is Phosphatidylserine decarboxylase proenzyme (218 aa).

The active-site Schiff-base intermediate with substrate; via pyruvic acid is S188. A Pyruvic acid (Ser); by autocatalysis modification is found at S188.

It belongs to the phosphatidylserine decarboxylase family. PSD-A subfamily. As to quaternary structure, heterodimer of a large membrane-associated beta subunit and a small pyruvoyl-containing alpha subunit. Pyruvate is required as a cofactor. Post-translationally, is synthesized initially as an inactive proenzyme. Formation of the active enzyme involves a self-maturation process in which the active site pyruvoyl group is generated from an internal serine residue via an autocatalytic post-translational modification. Two non-identical subunits are generated from the proenzyme in this reaction, and the pyruvate is formed at the N-terminus of the alpha chain, which is derived from the carboxyl end of the proenzyme. The post-translation cleavage follows an unusual pathway, termed non-hydrolytic serinolysis, in which the side chain hydroxyl group of the serine supplies its oxygen atom to form the C-terminus of the beta chain, while the remainder of the serine residue undergoes an oxidative deamination to produce ammonia and the pyruvoyl prosthetic group on the alpha chain.

Its subcellular location is the cell membrane. The catalysed reaction is a 1,2-diacyl-sn-glycero-3-phospho-L-serine + H(+) = a 1,2-diacyl-sn-glycero-3-phosphoethanolamine + CO2. Its pathway is phospholipid metabolism; phosphatidylethanolamine biosynthesis; phosphatidylethanolamine from CDP-diacylglycerol: step 2/2. Its function is as follows. Catalyzes the formation of phosphatidylethanolamine (PtdEtn) from phosphatidylserine (PtdSer). The protein is Phosphatidylserine decarboxylase proenzyme of Streptomyces coelicolor (strain ATCC BAA-471 / A3(2) / M145).